Reading from the N-terminus, the 588-residue chain is Oxidoreductase NdmD (588 aa).

The Rieske domain maps to 9–114 (WFPIATTEDL…VREKHGFIWT (106 aa)). Positions 50, 52, 69, and 72 each coordinate [2Fe-2S] cluster. An FAD-binding FR-type domain is found at 272–373 (PTHYICEVVT…TLPRNGFPLV (102 aa)). The 2Fe-2S ferredoxin-type domain maps to 503–588 (YEVELKKTGQ…CKSKKIVLDL (86 aa)). [2Fe-2S] cluster-binding residues include Cys-537, Cys-542, Cys-545, and Cys-575.

It depends on [2Fe-2S] cluster as a cofactor.

Functionally, involved in the caffeine degradation, which is the essential first step for assimilating the carbon and nitrogen in caffeine. Catalyzes the oxidation of NADH and transfers electrons to NdmA and NdmB, which catalyze the N-demethylation reactions. The chain is Oxidoreductase NdmD (ndmD) from Pseudomonas putida (Arthrobacter siderocapsulatus).